Here is a 327-residue protein sequence, read N- to C-terminus: GMP reductase (327 aa).

The active-site Thioimidate intermediate is C175. NADP(+) is bound at residue 204–227 (IIADGGIRTHGDVAKSIRFGATMV).

It belongs to the IMPDH/GMPR family. GuaC type 2 subfamily.

It catalyses the reaction IMP + NH4(+) + NADP(+) = GMP + NADPH + 2 H(+). Catalyzes the irreversible NADPH-dependent deamination of GMP to IMP. It functions in the conversion of nucleobase, nucleoside and nucleotide derivatives of G to A nucleotides, and in maintaining the intracellular balance of A and G nucleotides. This chain is GMP reductase, found in Bacillus cereus (strain ATCC 10987 / NRS 248).